Here is a 312-residue protein sequence, read N- to C-terminus: Olfactory receptor 1D2 (312 aa).

At Met1–Arg25 the chain is on the extracellular side. Asn5 carries N-linked (GlcNAc...) asparagine glycosylation. Residues Ile26–Ile49 traverse the membrane as a helical segment. Over Ser50 to Thr57 the chain is Cytoplasmic. The chain crosses the membrane as a helical span at residues Pro58–Pro79. The Extracellular segment spans residues Lys80–Gln100. A disulfide bridge connects residues Cys97 and Cys189. A helical transmembrane segment spans residues Leu101–Tyr120. Residues Asp121–Lys139 are Cytoplasmic-facing. A helical membrane pass occupies residues Leu140–Ile158. At His159 to His196 the chain is on the extracellular side. N-linked (GlcNAc...) asparagine glycosylation occurs at Asn195. The chain crosses the membrane as a helical span at residues Thr197–Val219. Over Leu220–Lys236 the chain is Cytoplasmic. The helical transmembrane segment at Ala237–Tyr259 threads the bilayer. Topologically, residues Leu260 to Ser271 are extracellular. A helical transmembrane segment spans residues Val272–Leu291. The Cytoplasmic portion of the chain corresponds to Arg292–Thr312.

This sequence belongs to the G-protein coupled receptor 1 family. As to expression, expressed in testis. Expressed in spermatozoa (at protein level). Expressed in olfactory epithelium.

It localises to the cell membrane. Its function is as follows. Odorant receptor which may be involved in sperm chemotaxis. Bourgeonal is a strong chemoattractant for sperm in vitro and is shown to be a strong agonist for OR1D2 in vitro. May also function in olfactory reception. The polypeptide is Olfactory receptor 1D2 (OR1D2) (Homo sapiens (Human)).